The primary structure comprises 276 residues: Pantothenate synthetase (276 aa).

An ATP-binding site is contributed by 27-34 (MGALHKGH). H34 acts as the Proton donor in catalysis. Q58 provides a ligand contact to (R)-pantoate. Q58 contributes to the beta-alanine binding site. 147–150 (GKKD) contributes to the ATP binding site. Q153 contacts (R)-pantoate. Residues V176 and 184 to 187 (LSSR) each bind ATP.

The protein belongs to the pantothenate synthetase family. As to quaternary structure, homodimer.

The protein localises to the cytoplasm. The enzyme catalyses (R)-pantoate + beta-alanine + ATP = (R)-pantothenate + AMP + diphosphate + H(+). Its pathway is cofactor biosynthesis; (R)-pantothenate biosynthesis; (R)-pantothenate from (R)-pantoate and beta-alanine: step 1/1. Its function is as follows. Catalyzes the condensation of pantoate with beta-alanine in an ATP-dependent reaction via a pantoyl-adenylate intermediate. The protein is Pantothenate synthetase of Helicobacter pylori (strain Shi470).